Reading from the N-terminus, the 30-residue chain is Natriuretic peptides A (30 aa).

Positions 1–3 (APR) are excised as a propeptide. An intrachain disulfide couples Cys11 to Cys27.

It belongs to the natriuretic peptide family. Post-translationally, cleaved upon secretion to produce the functional hormone.

The protein localises to the secreted. Functionally, hormone playing a key role in cardiovascular homeostasis through regulation of natriuresis, diuresis, and vasodilation. Has a cGMP-stimulating activity. The protein is Natriuretic peptides A of Pelophylax ridibundus (Marsh frog).